Here is a 700-residue protein sequence, read N- to C-terminus: Putative cysteine-rich receptor-like protein kinase 30 (700 aa).

Positions 1–24 are cleaved as a signal peptide; sequence MRQNNLFSLIFWLVPVSLIIVVSA. Gnk2-homologous domains follow at residues 25-129 and 135-250; these read QLCS…NQPS and LESV…LYPF. Residues 25 to 285 lie on the Extracellular side of the membrane; that stretch reads QLCSEKFGTF…KDEKTIHTGT (261 aa). Asn63, Asn105, Asn146, Asn150, and Asn191 each carry an N-linked (GlcNAc...) asparagine glycan. The chain crosses the membrane as a helical span at residues 286-306; sequence IIGIVIVVAMVIIMALLALGV. At 307 to 700 the chain is on the cytoplasmic side; that stretch reads SVCRSRKKYQ…SKSMYRNTED (394 aa). In terms of domain architecture, Protein kinase spans 346-626; the sequence is FLASNKIGQG…IFQMLTNSSI (281 aa). Residues 352-360 and Lys374 each bind ATP; that span reads IGQGGFGEV. Asp474 functions as the Proton acceptor in the catalytic mechanism. The residue at position 478 (Ser478) is a Phosphoserine. Thr514 carries the post-translational modification Phosphothreonine. Tyr522 carries the phosphotyrosine modification.

This sequence belongs to the protein kinase superfamily. Ser/Thr protein kinase family. CRK subfamily.

Its subcellular location is the membrane. The catalysed reaction is L-seryl-[protein] + ATP = O-phospho-L-seryl-[protein] + ADP + H(+). The enzyme catalyses L-threonyl-[protein] + ATP = O-phospho-L-threonyl-[protein] + ADP + H(+). The polypeptide is Putative cysteine-rich receptor-like protein kinase 30 (CRK30) (Arabidopsis thaliana (Mouse-ear cress)).